We begin with the raw amino-acid sequence, 367 residues long: tRNA uridine(34) hydroxylase (367 aa).

One can recognise a Rhodanese domain in the interval E159–S249. The active-site Cysteine persulfide intermediate is the C213.

It belongs to the TrhO family.

It catalyses the reaction uridine(34) in tRNA + AH2 + O2 = 5-hydroxyuridine(34) in tRNA + A + H2O. Its function is as follows. Catalyzes oxygen-dependent 5-hydroxyuridine (ho5U) modification at position 34 in tRNAs. This Leptospira borgpetersenii serovar Hardjo-bovis (strain L550) protein is tRNA uridine(34) hydroxylase.